A 356-amino-acid polypeptide reads, in one-letter code: GMP reductase (356 aa).

Residues 26 to 27, Lys78, 132 to 134, and 183 to 184 each bind NADP(+); these read SR, DVA, and IG. K(+) contacts are provided by Gly184, Gly186, and Cys189. The Thioimidate intermediate role is filled by Cys189. Thr191 acts as the Proton donor/acceptor in catalysis. K(+) is bound at residue Arg192. Residues 222 to 224, 245 to 246, 271 to 273, and 289 to 293 contribute to the GMP site; these read DGG, GG, GMS, and RASEG. NADP(+) contacts are provided by residues Met272, 288–289, and 317–320; these read YR and SACT.

It belongs to the IMPDH/GMPR family.

The enzyme catalyses IMP + NH4(+) + NADP(+) = GMP + NADPH + 2 H(+). Functionally, catalyzes the irreversible NADPH-dependent deamination of GMP to IMP. It functions in the conversion of nucleobase, nucleoside and nucleotide derivatives of G to A nucleotides, and in maintaining the intracellular balance of A and G nucleotides. The chain is GMP reductase from Ascaris suum (Pig roundworm).